We begin with the raw amino-acid sequence, 180 residues long: NAD(P)H-quinone oxidoreductase subunit I, chloroplastic (180 aa).

4Fe-4S ferredoxin-type domains lie at 55-84 and 95-124; these read GRIH…VDWR and LNYS…MTEE. [4Fe-4S] cluster contacts are provided by cysteine 64, cysteine 67, cysteine 70, cysteine 74, cysteine 104, cysteine 107, cysteine 110, and cysteine 114.

This sequence belongs to the complex I 23 kDa subunit family. NDH is composed of at least 16 different subunits, 5 of which are encoded in the nucleus. [4Fe-4S] cluster serves as cofactor.

Its subcellular location is the plastid. The protein resides in the chloroplast thylakoid membrane. It catalyses the reaction a plastoquinone + NADH + (n+1) H(+)(in) = a plastoquinol + NAD(+) + n H(+)(out). The catalysed reaction is a plastoquinone + NADPH + (n+1) H(+)(in) = a plastoquinol + NADP(+) + n H(+)(out). Functionally, NDH shuttles electrons from NAD(P)H:plastoquinone, via FMN and iron-sulfur (Fe-S) centers, to quinones in the photosynthetic chain and possibly in a chloroplast respiratory chain. The immediate electron acceptor for the enzyme in this species is believed to be plastoquinone. Couples the redox reaction to proton translocation, and thus conserves the redox energy in a proton gradient. This is NAD(P)H-quinone oxidoreductase subunit I, chloroplastic from Amborella trichopoda.